The sequence spans 419 residues: D-amino acid dehydrogenase (419 aa).

3–17 (VLVLGAGVAGVSSVW) is a binding site for FAD.

Belongs to the DadA oxidoreductase family. FAD is required as a cofactor.

The catalysed reaction is a D-alpha-amino acid + A + H2O = a 2-oxocarboxylate + AH2 + NH4(+). It functions in the pathway amino-acid degradation; D-alanine degradation; NH(3) and pyruvate from D-alanine: step 1/1. Functionally, oxidative deamination of D-amino acids. In Neisseria gonorrhoeae (strain ATCC 700825 / FA 1090), this protein is D-amino acid dehydrogenase.